The following is a 360-amino-acid chain: MGSTAADMAASADEEACMYALQLVSSSILPMTLKNAIELGLLETLVAAGGKLLTPAEVAAKLPSTANPAAADMVDRMLRLLASYNVVSCTMEEGKDGRLSRRYRAAPVCKFLTPNEDGVSMAALALMNQDKVLMESWYYLKDAVLDGGIPFNKAYGMSAFEYHGTDPRFNRVFNEGMKNHSIIITKKLLEVYKGFEGLGTIVDVGGGVGATVGAITAAYPAIKGINFDLPHVISEAQPFPGVTHVGGDMFQKVPSGDAILMKWILHDWSDEHCATLLKNCYDALPAHGKVVLVECILPVNPEATPKAQGVFHVDMIMLAHNPGGRERYEREFEALAKGAGFKAIKTTYIYANAFAIEFTK.

127–133 contacts substrate; it reads MNQDKVL. Residues 159 to 177 form a substrate binding region; that stretch reads AFEYHGTDPRFNRVFNEGM. Residues Gly205, Asp228, Asp248, Met249, and Lys262 each contribute to the S-adenosyl-L-methionine site. Catalysis depends on His266, which acts as the Proton acceptor.

This sequence belongs to the class I-like SAM-binding methyltransferase superfamily. Cation-independent O-methyltransferase family. COMT subfamily. Homodimer.

In terms of biological role, flavone-specific O-methyltransferase with a preference for flavones &gt; flavonols. Active with tricetin, luteolin, quercitin and eriodictyol. Very low activity with phenylpropanoids (5-hydroxyferulic acid and caffeic acid). Catalyzes the sequential O-methylation of tricetin via 3'-O-methyltricetin, 3',5'-O-methyltricetin to 3',4',5'-O-trimethyltricetin. The sequence is that of Flavone O-methyltransferase 1 (OMT1) from Triticum aestivum (Wheat).